A 92-amino-acid chain; its full sequence is Small ribosomal subunit protein uS19 (92 aa).

This sequence belongs to the universal ribosomal protein uS19 family.

Protein S19 forms a complex with S13 that binds strongly to the 16S ribosomal RNA. In Chelativorans sp. (strain BNC1), this protein is Small ribosomal subunit protein uS19.